The following is a 149-amino-acid chain: Transcriptional regulator MraZ (149 aa).

SpoVT-AbrB domains follow at residues 7-54 and 83-126; these read KYVN…GISH and AVQL…QPQN.

The protein belongs to the MraZ family. In terms of assembly, forms oligomers.

It localises to the cytoplasm. It is found in the nucleoid. This is Transcriptional regulator MraZ from Rickettsia peacockii (strain Rustic).